A 448-amino-acid chain; its full sequence is Carbon catabolite repressor protein 4 homolog 3 (448 aa).

Residues 50-67 (SSTSGPSDSNPESSSNRS) are compositionally biased toward low complexity. The interval 50–92 (SSTSGPSDSNPESSSNRSYSRRWQNPLPRRQHPDQIPSSQIAR) is disordered. Glutamate 162 is a binding site for Mg(2+).

The protein belongs to the CCR4/nocturin family. Component of the CCR4-NOT complex, at least composed of CRR4 and CAF1 proteins. Requires Mg(2+) as cofactor.

The protein resides in the nucleus. The protein localises to the cytoplasm. The catalysed reaction is Exonucleolytic cleavage of poly(A) to 5'-AMP.. In terms of biological role, acts as a catalytic component of the CCR4-NOT core complex, which in the nucleus seems to be a general transcription factor, and in the cytoplasm the major mRNA deadenylase involved in mRNA turnover. The polypeptide is Carbon catabolite repressor protein 4 homolog 3 (CCR4-3) (Arabidopsis thaliana (Mouse-ear cress)).